Here is a 489-residue protein sequence, read N- to C-terminus: Long chain base biosynthesis protein 2b (489 aa).

A helical transmembrane segment spans residues 2–22 (ITIPYLTAVSTYFSYGLLFAF). Residue Lys-311 is modified to N6-(pyridoxal phosphate)lysine.

It belongs to the class-II pyridoxal-phosphate-dependent aminotransferase family. In terms of assembly, heterodimer with LCB1. Component of the serine palmitoyltransferase (SPT) complex, composed of LCB1 and LCB2 (LCB2a or LCB2b). Pyridoxal 5'-phosphate serves as cofactor. As to expression, ubiquitous with the highest expression in flowers.

It localises to the endoplasmic reticulum membrane. The catalysed reaction is L-serine + hexadecanoyl-CoA + H(+) = 3-oxosphinganine + CO2 + CoA. It functions in the pathway lipid metabolism; sphingolipid metabolism. In terms of biological role, serine palmitoyltransferase (SPT). The heterodimer formed with LCB1 constitutes the catalytic core. Plays an important role during male gametogenesis and embryogenesis. This Arabidopsis thaliana (Mouse-ear cress) protein is Long chain base biosynthesis protein 2b (LCB2b).